A 1022-amino-acid polypeptide reads, in one-letter code: rDNA transcriptional regulator POL5 (1022 aa).

Composition is skewed to acidic residues over residues 706–719 (EEFE…DASE), 728–748 (SESE…EDEA), and 781–802 (DLDQ…ESMD). Disordered regions lie at residues 706–748 (EEFE…EDEA) and 778–805 (GEVD…DDEK). S789 bears the Phosphoserine mark.

The protein belongs to the MYBBP1A family. As to quaternary structure, interacts with FRK1.

The protein localises to the nucleus. It is found in the nucleolus. The enzyme catalyses DNA(n) + a 2'-deoxyribonucleoside 5'-triphosphate = DNA(n+1) + diphosphate. Its activity is regulated as follows. Stimulated by PCNA and inhibited by aphidicolin. Its function is as follows. Plays an important role in the regulation of rRNA transcription. Binds near or at the enhancer region of rRNA repeating units. May have DNA polymerase activity, but it is not required for in vivo function. The protein is rDNA transcriptional regulator POL5 of Saccharomyces cerevisiae (strain ATCC 204508 / S288c) (Baker's yeast).